The following is a 221-amino-acid chain: 2-C-methyl-D-erythritol 4-phosphate cytidylyltransferase (221 aa).

Belongs to the IspD/TarI cytidylyltransferase family. IspD subfamily.

The enzyme catalyses 2-C-methyl-D-erythritol 4-phosphate + CTP + H(+) = 4-CDP-2-C-methyl-D-erythritol + diphosphate. The protein operates within isoprenoid biosynthesis; isopentenyl diphosphate biosynthesis via DXP pathway; isopentenyl diphosphate from 1-deoxy-D-xylulose 5-phosphate: step 2/6. Its function is as follows. Catalyzes the formation of 4-diphosphocytidyl-2-C-methyl-D-erythritol from CTP and 2-C-methyl-D-erythritol 4-phosphate (MEP). This Roseobacter denitrificans (strain ATCC 33942 / OCh 114) (Erythrobacter sp. (strain OCh 114)) protein is 2-C-methyl-D-erythritol 4-phosphate cytidylyltransferase.